A 327-amino-acid polypeptide reads, in one-letter code: 4-hydroxy-2-oxoglutarate aldolase, mitochondrial (327 aa).

The N-terminal 25 residues, 1–25 (MLGPQVWSSVRQGLSRSLSRNVGVW), are a transit peptide targeting the mitochondrion. 77 to 78 (SN) is a binding site for substrate. Lys-196 serves as the catalytic Schiff-base intermediate with substrate. Positions 198 and 222 each coordinate substrate.

Belongs to the DapA family. In terms of assembly, homotetramer.

Its subcellular location is the mitochondrion. The catalysed reaction is (4S)-4-hydroxy-2-oxoglutarate = glyoxylate + pyruvate. The enzyme catalyses (4R)-4-hydroxy-2-oxoglutarate = glyoxylate + pyruvate. Its activity is regulated as follows. Inhibited by divalent cations. In terms of biological role, catalyzes the final step in the metabolic pathway of hydroxyproline. In Homo sapiens (Human), this protein is 4-hydroxy-2-oxoglutarate aldolase, mitochondrial (HOGA1).